The primary structure comprises 958 residues: Transportin MOS14 (958 aa).

The region spanning 26–93 is the Importin N-terminal domain; it reads ADRWLQNFQG…RQSLTTLLKK (68 aa).

Belongs to the importin beta family. Interacts with RS2Z33, RSZ21, RS31A, SR34 and RAN1.

It localises to the nucleus. Functionally, functions as a nuclear import receptor for serine-arginine rich (SR) proteins. Regulates nuclear import of SR proteins that are required for proper splicing of the two resistance (R) genes SNC1 and RPS4, a crucial step for their functions in plant immunity. The chain is Transportin MOS14 from Arabidopsis thaliana (Mouse-ear cress).